Consider the following 517-residue polypeptide: ATP synthase subunit alpha (517 aa).

Gly174 to Thr181 serves as a coordination point for ATP.

This sequence belongs to the ATPase alpha/beta chains family. In terms of assembly, F-type ATPases have 2 components, CF(1) - the catalytic core - and CF(0) - the membrane proton channel. CF(1) has five subunits: alpha(3), beta(3), gamma(1), delta(1), epsilon(1). CF(0) has three main subunits: a(1), b(2) and c(9-12). The alpha and beta chains form an alternating ring which encloses part of the gamma chain. CF(1) is attached to CF(0) by a central stalk formed by the gamma and epsilon chains, while a peripheral stalk is formed by the delta and b chains.

Its subcellular location is the cell inner membrane. It carries out the reaction ATP + H2O + 4 H(+)(in) = ADP + phosphate + 5 H(+)(out). Produces ATP from ADP in the presence of a proton gradient across the membrane. The alpha chain is a regulatory subunit. The polypeptide is ATP synthase subunit alpha (Polaromonas sp. (strain JS666 / ATCC BAA-500)).